The sequence spans 600 residues: Integrator complex subunit 11 (600 aa).

Zn(2+)-binding residues include H68, H70, D72, H73, H157, and D178. Residues H68–H73 carry the HXHXDH motif motif. The active site involves E203. K381 participates in a covalent cross-link: Glycyl lysine isopeptide (Lys-Gly) (interchain with G-Cter in SUMO). Zn(2+) is bound at residue H414. Glycyl lysine isopeptide (Lys-Gly) (interchain with G-Cter in SUMO) cross-links involve residues K462 and K475. The short motif at L469–L479 is the Nuclear localization signal element.

This sequence belongs to the metallo-beta-lactamase superfamily. RNA-metabolizing metallo-beta-lactamase-like family. INTS11 subfamily. In terms of assembly, component of the Integrator complex, composed of core subunits INTS1, INTS2, INTS3, INTS4, INTS5, INTS6, INTS7, INTS8, INTS9/RC74, INTS10, INTS11/CPSF3L, INTS12, INTS13, INTS14 and INTS15. The core complex associates with protein phosphatase 2A subunits PPP2CA and PPP2R1A, to form the Integrator-PP2A (INTAC) complex. INTS11 is part of the RNA endonuclease subcomplex, composed of INTS4, INTS9, INTS11 and inositol hexakisphosphate (InsP6). Interacts with WDR73; interaction is required for the assembly of the RNA endonuclease subcomplex in the cytoplasm. Interacts with BRAT1; interaction is required for the assembly of the RNA endonuclease subcomplex and inhibits the endonuclease activity of INTS11 before formation of mature integrator complex. Zn(2+) serves as cofactor. In terms of processing, sumoylated; sumoylation regulates its subcellular location and is required for integrator complex integrity.

It is found in the nucleus. It localises to the cytoplasm. The RNA endonuclease activity is inhibited by BRAT1 that forms hyrogen bond and hydrophobic interactions with the active site. Functionally, RNA endonuclease component of the integrator complex, a multiprotein complex that terminates RNA polymerase II (Pol II) transcription in the promoter-proximal region of genes. The integrator complex provides a quality checkpoint during transcription elongation by driving premature transcription termination of transcripts that are unfavorably configured for transcriptional elongation: the complex terminates transcription by (1) catalyzing dephosphorylation of the C-terminal domain (CTD) of Pol II subunit POLR2A/RPB1 and SUPT5H/SPT5, (2) degrading the exiting nascent RNA transcript via endonuclease activity and (3) promoting the release of Pol II from bound DNA. The integrator complex is also involved in terminating the synthesis of non-coding Pol II transcripts, such as enhancer RNAs (eRNAs), small nuclear RNAs (snRNAs), telomerase RNAs and long non-coding RNAs (lncRNAs). Within the integrator complex, INTS11 constitutes the RNA endonuclease subunit that degrades exiting nascent RNA transcripts. Mediates recruitment of cytoplasmic dynein to the nuclear envelope, probably as component of the integrator complex. The chain is Integrator complex subunit 11 (Ints11) from Rattus norvegicus (Rat).